We begin with the raw amino-acid sequence, 213 residues long: Imidazole glycerol phosphate synthase subunit HisH (213 aa).

The region spanning 4-211 is the Glutamine amidotransferase type-1 domain; that stretch reads NLGVIDYGMG…LHWLHQGAEP (208 aa). C82 acts as the Nucleophile in catalysis. Active-site residues include H186 and E188.

As to quaternary structure, heterodimer of HisH and HisF.

It localises to the cytoplasm. The catalysed reaction is 5-[(5-phospho-1-deoxy-D-ribulos-1-ylimino)methylamino]-1-(5-phospho-beta-D-ribosyl)imidazole-4-carboxamide + L-glutamine = D-erythro-1-(imidazol-4-yl)glycerol 3-phosphate + 5-amino-1-(5-phospho-beta-D-ribosyl)imidazole-4-carboxamide + L-glutamate + H(+). It catalyses the reaction L-glutamine + H2O = L-glutamate + NH4(+). It participates in amino-acid biosynthesis; L-histidine biosynthesis; L-histidine from 5-phospho-alpha-D-ribose 1-diphosphate: step 5/9. IGPS catalyzes the conversion of PRFAR and glutamine to IGP, AICAR and glutamate. The HisH subunit catalyzes the hydrolysis of glutamine to glutamate and ammonia as part of the synthesis of IGP and AICAR. The resulting ammonia molecule is channeled to the active site of HisF. The polypeptide is Imidazole glycerol phosphate synthase subunit HisH (Synechococcus sp. (strain CC9902)).